We begin with the raw amino-acid sequence, 1394 residues long: DNA-directed RNA polymerase subunit beta'' (1394 aa).

Cys224, Cys295, Cys302, and Cys305 together coordinate Zn(2+).

The protein belongs to the RNA polymerase beta' chain family. RpoC2 subfamily. In terms of assembly, in plastids the minimal PEP RNA polymerase catalytic core is composed of four subunits: alpha, beta, beta', and beta''. When a (nuclear-encoded) sigma factor is associated with the core the holoenzyme is formed, which can initiate transcription. Zn(2+) serves as cofactor.

The protein localises to the plastid. It is found in the chloroplast. It catalyses the reaction RNA(n) + a ribonucleoside 5'-triphosphate = RNA(n+1) + diphosphate. DNA-dependent RNA polymerase catalyzes the transcription of DNA into RNA using the four ribonucleoside triphosphates as substrates. This chain is DNA-directed RNA polymerase subunit beta'', found in Cucumis sativus (Cucumber).